A 243-amino-acid chain; its full sequence is Protein HUA2 (243 aa).

It is found in the cytoplasm. Its function is as follows. May have a role in actin patch assembly. This Saccharomyces cerevisiae (strain ATCC 204508 / S288c) (Baker's yeast) protein is Protein HUA2 (HUA2).